A 28-amino-acid chain; its full sequence is Morintide mO6 (28 aa).

The region spanning 1-28 is the Chitin-binding type-1 domain; sequence NGLCCSQYGFCGTTSAYCSRANGCQSNC. 2 disulfide bridges follow: C4–C18 and C24–C28.

In terms of tissue distribution, seeds (at protein level).

Chitin-binding protein which functions in defense against chitin-containing fungal pathogens. The sequence is that of Morintide mO6 from Moringa oleifera (Horseradish tree).